The primary structure comprises 984 residues: Translation initiation factor IF-2 (984 aa).

2 disordered regions span residues 92–267 and 280–392; these read KKRT…ERRR and MNAP…EEHV. The segment covering 104 to 123 has biased composition (low complexity); it reads PATPEVQPVAEAPAAAPAAP. The segment covering 124–177 has biased composition (basic and acidic residues); it reads RIDEAELARREEEARRQAELIRRQEEELAEKRRLREEAEAREREQAEKAERAEQ. The span at 193–235 shows a compositional bias: low complexity; that stretch reads DAAAAAPAKEAAKPAAAPVAAAAAAAEQQAADTKLAAQTAATQ. Basic and acidic residues-rich tracts occupy residues 236 to 267 and 291 to 302; these read AKEDAKAKAAAESKARADEEAARAKDLDERRR and KAPEKPQPEKAA. The segment covering 310-335 has biased composition (low complexity); it reads PAAPAARPGAPAAPGAAAAPGAAGAG. The segment covering 351 to 361 has biased composition (basic and acidic residues); it reads PAKKKEIKTRG. Residues 363 to 375 are compositionally biased toward gly residues; that stretch reads ASGGVGRGNWRGG. Residues 381–392 show a composition bias toward basic and acidic residues; the sequence is GSNDRGGHEEHV. The tr-type G domain occupies 484 to 653; it reads PRAPVVTVMG…LLQAEVLELK (170 aa). Residues 493-500 form a G1 region; sequence GHVDHGKT. 493-500 is a GTP binding site; sequence GHVDHGKT. The interval 518 to 522 is G2; sequence GITQH. Positions 539 to 542 are G3; that stretch reads DTPG. GTP-binding positions include 539 to 543 and 593 to 596; these read DTPGH and NKID. The interval 593-596 is G4; the sequence is NKID. The G5 stretch occupies residues 629 to 631; the sequence is SAK.

This sequence belongs to the TRAFAC class translation factor GTPase superfamily. Classic translation factor GTPase family. IF-2 subfamily.

It is found in the cytoplasm. In terms of biological role, one of the essential components for the initiation of protein synthesis. Protects formylmethionyl-tRNA from spontaneous hydrolysis and promotes its binding to the 30S ribosomal subunits. Also involved in the hydrolysis of GTP during the formation of the 70S ribosomal complex. The protein is Translation initiation factor IF-2 of Variovorax paradoxus (strain S110).